A 142-amino-acid polypeptide reads, in one-letter code: Inner membrane protein YqaA (142 aa).

At 1–2 (MS) the chain is on the cytoplasmic side. A helical transmembrane segment spans residues 3–23 (EALSLFSLFASSFLSATLLPG). The Periplasmic portion of the chain corresponds to 24 to 26 (NSE). Residues 27–47 (VVLVAMLLSGISHPWVLVLTA) traverse the membrane as a helical segment. The Cytoplasmic segment spans residues 48–86 (TMGNSLGGLTNVILGRFFPLRKTSRWQEKATGWLKRYGA). A helical membrane pass occupies residues 87–107 (VTLLLSWMPVVGDLLCLLAGW). Residues 108 to 142 (MRISWGPVIFFLCLGKALRYVAVAAATVQGMMWWH) lie on the Periplasmic side of the membrane.

To H.influenzae HI_0489.

Its subcellular location is the cell inner membrane. The polypeptide is Inner membrane protein YqaA (yqaA) (Escherichia coli (strain K12)).